The sequence spans 211 residues: Transcriptional regulatory protein LiaR (211 aa).

Residues 3–119 (RVLLIDDHEM…EIADAIRAAS (117 aa)) form the Response regulatory domain. A 4-aspartylphosphate modification is found at aspartate 54. The HTH luxR-type domain occupies 143–208 (NALPHESLTK…QAAVYAHRNH (66 aa)). Residues 167 to 186 (NKEIGEELFITIKTVKTHIT) constitute a DNA-binding region (H-T-H motif).

Post-translationally, phosphorylated by LiaS.

The protein localises to the cytoplasm. In terms of biological role, member of the two-component regulatory system LiaS/LiaR probably involved in response to a subset of cell wall-active antibiotics that interfere with the lipid II cycle in the cytoplasmic membrane (bacitracin, nisin, ramoplanin and vancomycin). Also seems to be involved in response to cationic antimicrobial peptides and secretion stress. LiaR regulates the transcription of the liaIHGFSR operon. The protein is Transcriptional regulatory protein LiaR (liaR) of Bacillus subtilis (strain 168).